The following is a 180-amino-acid chain: MDNHGILESLLFTAGDEGLDEKQLLEILDMSKDQLVELIENYSSHGLMIQRFGTTYVLTTKKEAATYIEQLIEQKSQMKLSQAAMEVLSIIAYNQPLSRSDIELIRSINSDGAVKTLIAKGLVEAKVVNEQRSQQLITTDLFLNVFGISNIEDLPTTEEDDEEMDAFFSNLVNQKGENND.

This sequence belongs to the ScpB family. As to quaternary structure, homodimer. Homodimerization may be required to stabilize the binding of ScpA to the Smc head domains. Component of a cohesin-like complex composed of ScpA, ScpB and the Smc homodimer, in which ScpA and ScpB bind to the head domain of Smc. The presence of the three proteins is required for the association of the complex with DNA.

It is found in the cytoplasm. Functionally, participates in chromosomal partition during cell division. May act via the formation of a condensin-like complex containing Smc and ScpA that pull DNA away from mid-cell into both cell halves. The sequence is that of Segregation and condensation protein B from Staphylococcus aureus (strain Mu3 / ATCC 700698).